A 208-amino-acid polypeptide reads, in one-letter code: Imidazoleglycerol-phosphate dehydratase (208 aa).

The segment at 1 to 22 is disordered; sequence MTEDTETSSTGAGADDRTAAIS.

This sequence belongs to the imidazoleglycerol-phosphate dehydratase family.

The protein resides in the cytoplasm. The enzyme catalyses D-erythro-1-(imidazol-4-yl)glycerol 3-phosphate = 3-(imidazol-4-yl)-2-oxopropyl phosphate + H2O. The protein operates within amino-acid biosynthesis; L-histidine biosynthesis; L-histidine from 5-phospho-alpha-D-ribose 1-diphosphate: step 6/9. This is Imidazoleglycerol-phosphate dehydratase from Haloquadratum walsbyi (strain DSM 16790 / HBSQ001).